A 109-amino-acid polypeptide reads, in one-letter code: Phosphocarrier protein HPr (109 aa).

In terms of domain architecture, HPr spans 22 to 109 (ELSAVFTIRN…EVFNSGFGEL (88 aa)). The Pros-phosphohistidine intermediate role is filled by His36.

The protein belongs to the HPr family.

The protein localises to the cytoplasm. In terms of biological role, general (non sugar-specific) component of the phosphoenolpyruvate-dependent sugar phosphotransferase system (sugar PTS). This major carbohydrate active-transport system catalyzes the phosphorylation of incoming sugar substrates concomitantly with their translocation across the cell membrane. The phosphoryl group from phosphoenolpyruvate (PEP) is transferred to the phosphoryl carrier protein HPr by enzyme I. Phospho-HPr then transfers it to the PTS EIIA domain. The sequence is that of Phosphocarrier protein HPr (ptsH) from Chlamydia trachomatis serovar D (strain ATCC VR-885 / DSM 19411 / UW-3/Cx).